The sequence spans 449 residues: Exodeoxyribonuclease 7 large subunit (449 aa).

This sequence belongs to the XseA family. In terms of assembly, heterooligomer composed of large and small subunits.

It localises to the cytoplasm. It carries out the reaction Exonucleolytic cleavage in either 5'- to 3'- or 3'- to 5'-direction to yield nucleoside 5'-phosphates.. Its function is as follows. Bidirectionally degrades single-stranded DNA into large acid-insoluble oligonucleotides, which are then degraded further into small acid-soluble oligonucleotides. This is Exodeoxyribonuclease 7 large subunit from Lacticaseibacillus paracasei (strain ATCC 334 / BCRC 17002 / CCUG 31169 / CIP 107868 / KCTC 3260 / NRRL B-441) (Lactobacillus paracasei).